The chain runs to 86 residues: Curamycin polyketide synthase acyl carrier protein (86 aa).

The region spanning 7–86 (QVTVEELATL…VVNGALASGA (80 aa)) is the Carrier domain. At Ser44 the chain carries O-(pantetheine 4'-phosphoryl)serine.

In terms of processing, 4'-phosphopantetheine is transferred from CoA to a specific serine of the apo-ACP-like protein.

It participates in antibiotic biosynthesis; curamycin biosynthesis. In terms of biological role, acyl carrier protein. This chain is Curamycin polyketide synthase acyl carrier protein (curE), found in Streptomyces cyaneus (Streptomyces curacoi).